Consider the following 315-residue polypeptide: Heterodimeric geranylgeranyl pyrophosphate synthase small subunit 1, chloroplastic (315 aa).

Residues D124 and G130 each coordinate Mg(2+). Residues K228, Q265, and K280 each contribute to the dimethylallyl diphosphate site.

This sequence belongs to the FPP/GGPP synthase family. In terms of assembly, part of a heterodimeric geranyl(geranyl)diphosphate synthase. Mg(2+) is required as a cofactor. In terms of tissue distribution, mainly expressed in trichomes, and, to a lower extent, in roots, leaves, flowers and stems.

The protein localises to the plastid. It localises to the chloroplast thylakoid membrane. The protein resides in the chloroplast. Its function is as follows. Heterodimeric geranyl(geranyl)-diphosphate (GPP) synthase small subunit. The small subunit alone is inactive in vitro while the large subunit GGPPS1 catalyzes mainly the production of geranygeranyl-diphosphate in vitro. Upon association of the two subunits, the product profile changes and the production of gerany-diphosphate is strongly increased. In Cannabis sativa (Hemp), this protein is Heterodimeric geranylgeranyl pyrophosphate synthase small subunit 1, chloroplastic.